The following is a 180-amino-acid chain: Large ribosomal subunit protein uL10 (180 aa).

Positions 161-180 (SKAEGSEETESNETTETVEE) are disordered. The span at 166-180 (SEETESNETTETVEE) shows a compositional bias: acidic residues.

This sequence belongs to the universal ribosomal protein uL10 family. In terms of assembly, part of the ribosomal stalk of the 50S ribosomal subunit. The N-terminus interacts with L11 and the large rRNA to form the base of the stalk. The C-terminus forms an elongated spine to which L12 dimers bind in a sequential fashion forming a multimeric L10(L12)X complex.

Forms part of the ribosomal stalk, playing a central role in the interaction of the ribosome with GTP-bound translation factors. This Finegoldia magna (strain ATCC 29328 / DSM 20472 / WAL 2508) (Peptostreptococcus magnus) protein is Large ribosomal subunit protein uL10.